The chain runs to 555 residues: B3 domain-containing protein REM10 (555 aa).

DNA-binding regions (TF-B3) lie at residues 11–103 (NPQF…LGPS), 150–247 (CFVA…FPMT), 276–372 (SFVA…LPLN), and 460–554 (SQNR…FCSK).

Its subcellular location is the nucleus. This Arabidopsis thaliana (Mouse-ear cress) protein is B3 domain-containing protein REM10 (REM10).